A 333-amino-acid polypeptide reads, in one-letter code: Ketol-acid reductoisomerase (NADP(+)) (333 aa).

One can recognise a KARI N-terminal Rossmann domain in the interval A2–T182. NADP(+) is bound by residues Y25–Q28, S51, S53, and D83–Q86. The active site involves H108. NADP(+) is bound at residue G134. Positions T183–V328 constitute a KARI C-terminal knotted domain. Mg(2+) is bound by residues D191, E195, E227, and E231. S252 contributes to the substrate binding site.

This sequence belongs to the ketol-acid reductoisomerase family. Requires Mg(2+) as cofactor.

The catalysed reaction is (2R)-2,3-dihydroxy-3-methylbutanoate + NADP(+) = (2S)-2-acetolactate + NADPH + H(+). It catalyses the reaction (2R,3R)-2,3-dihydroxy-3-methylpentanoate + NADP(+) = (S)-2-ethyl-2-hydroxy-3-oxobutanoate + NADPH + H(+). It participates in amino-acid biosynthesis; L-isoleucine biosynthesis; L-isoleucine from 2-oxobutanoate: step 2/4. The protein operates within amino-acid biosynthesis; L-valine biosynthesis; L-valine from pyruvate: step 2/4. Its function is as follows. Involved in the biosynthesis of branched-chain amino acids (BCAA). Catalyzes an alkyl-migration followed by a ketol-acid reduction of (S)-2-acetolactate (S2AL) to yield (R)-2,3-dihydroxy-isovalerate. In the isomerase reaction, S2AL is rearranged via a Mg-dependent methyl migration to produce 3-hydroxy-3-methyl-2-ketobutyrate (HMKB). In the reductase reaction, this 2-ketoacid undergoes a metal-dependent reduction by NADPH to yield (R)-2,3-dihydroxy-isovalerate. The protein is Ketol-acid reductoisomerase (NADP(+)) of Streptomyces avermitilis (strain ATCC 31267 / DSM 46492 / JCM 5070 / NBRC 14893 / NCIMB 12804 / NRRL 8165 / MA-4680).